The following is a 249-amino-acid chain: Enolase-phosphatase E1 (249 aa).

Positions 9 and 11 each coordinate Mg(2+). Residues 137-138 (SS) and K177 contribute to the substrate site. D204 contacts Mg(2+).

The protein belongs to the HAD-like hydrolase superfamily. MasA/MtnC family. Monomer. The cofactor is Mg(2+).

It localises to the cytoplasm. It is found in the nucleus. The enzyme catalyses 5-methylsulfanyl-2,3-dioxopentyl phosphate + H2O = 1,2-dihydroxy-5-(methylsulfanyl)pent-1-en-3-one + phosphate. It participates in amino-acid biosynthesis; L-methionine biosynthesis via salvage pathway; L-methionine from S-methyl-5-thio-alpha-D-ribose 1-phosphate: step 3/6. It functions in the pathway amino-acid biosynthesis; L-methionine biosynthesis via salvage pathway; L-methionine from S-methyl-5-thio-alpha-D-ribose 1-phosphate: step 4/6. Functionally, bifunctional enzyme that catalyzes the enolization of 2,3-diketo-5-methylthiopentyl-1-phosphate (DK-MTP-1-P) into the intermediate 2-hydroxy-3-keto-5-methylthiopentenyl-1-phosphate (HK-MTPenyl-1-P), which is then dephosphorylated to form the acireductone 1,2-dihydroxy-3-keto-5-methylthiopentene (DHK-MTPene). This chain is Enolase-phosphatase E1, found in Lodderomyces elongisporus (strain ATCC 11503 / CBS 2605 / JCM 1781 / NBRC 1676 / NRRL YB-4239) (Yeast).